The chain runs to 156 residues: Small ribosomal subunit protein uS7 (156 aa).

This sequence belongs to the universal ribosomal protein uS7 family. As to quaternary structure, part of the 30S ribosomal subunit. Contacts proteins S9 and S11.

One of the primary rRNA binding proteins, it binds directly to 16S rRNA where it nucleates assembly of the head domain of the 30S subunit. Is located at the subunit interface close to the decoding center, probably blocks exit of the E-site tRNA. This chain is Small ribosomal subunit protein uS7, found in Rhizobium meliloti (strain 1021) (Ensifer meliloti).